Here is a 1050-residue protein sequence, read N- to C-terminus: Self-sufficient cytochrome P450 monooxygenase CYP505E3 (1050 aa).

C406 lines the heme pocket. A compositionally biased stretch (polar residues) spans 459–481 (RGQSATGLSQGSMSASGATSSVA). Residues 459-495 (RGQSATGLSQGSMSASGATSSVASPGPPAATGAQSNP) form a disordered region. The Flavodoxin-like domain occupies 501–641 (ISFFYGSNSG…DLELWEETNL (141 aa)). FMN is bound by residues 507-511 (SNSGT) and 585-617 (VFGC…TRLT). In terms of domain architecture, FAD-binding FR-type spans 679-907 (RGLVEAKVTA…RPAKDAFHLP (229 aa)).

In the N-terminal section; belongs to the cytochrome P450 family. Requires FAD as cofactor. It depends on FMN as a cofactor. The cofactor is heme.

The enzyme catalyses 2 oxidized [cytochrome P450] + NADPH = 2 reduced [cytochrome P450] + NADP(+) + H(+). It carries out the reaction an organic molecule + reduced [NADPH--hemoprotein reductase] + O2 = an alcohol + oxidized [NADPH--hemoprotein reductase] + H2O + H(+). It catalyses the reaction decane + reduced [NADPH--hemoprotein reductase] + O2 = 3-decanol + oxidized [NADPH--hemoprotein reductase] + H2O + H(+). The catalysed reaction is dodecane + reduced [NADPH--hemoprotein reductase] + O2 = 5-dodecanol + oxidized [NADPH--hemoprotein reductase] + H2O + H(+). The enzyme catalyses tetradecane + reduced [NADPH--hemoprotein reductase] + O2 = 7-tetradecanol + oxidized [NADPH--hemoprotein reductase] + H2O + H(+). It carries out the reaction hexadecane + reduced [NADPH--hemoprotein reductase] + O2 = 9-hexadecanol + oxidized [NADPH--hemoprotein reductase] + H2O + H(+). It catalyses the reaction dodecanoate + reduced [NADPH--hemoprotein reductase] + O2 = 5-hydroxydodecanoate + oxidized [NADPH--hemoprotein reductase] + H2O + H(+). The catalysed reaction is tetradecanoate + reduced [NADPH--hemoprotein reductase] + O2 = 7-hydroxytetradecanoate + oxidized [NADPH--hemoprotein reductase] + H2O + H(+). The enzyme catalyses hexadecanoate + reduced [NADPH--hemoprotein reductase] + O2 = 9-hydroxyhexadecanoate + oxidized [NADPH--hemoprotein reductase] + H2O + H(+). It carries out the reaction decan-1-ol + reduced [NADPH--hemoprotein reductase] + O2 = 1,3-decanediol + oxidized [NADPH--hemoprotein reductase] + H2O + H(+). It catalyses the reaction decan-1-ol + reduced [NADPH--hemoprotein reductase] + O2 = 1,7-decanediol + oxidized [NADPH--hemoprotein reductase] + H2O + H(+). The catalysed reaction is dodecan-1-ol + reduced [NADPH--hemoprotein reductase] + O2 = 1,5-dodecanediol + oxidized [NADPH--hemoprotein reductase] + H2O + H(+). The enzyme catalyses dodecan-1-ol + reduced [NADPH--hemoprotein reductase] + O2 = 1,4-dodecanediol + oxidized [NADPH--hemoprotein reductase] + H2O + H(+). It carries out the reaction dodecan-1-ol + reduced [NADPH--hemoprotein reductase] + O2 = 1,6-dodecanediol + oxidized [NADPH--hemoprotein reductase] + H2O + H(+). In terms of biological role, self-sufficient cytochrome P450 monooxygenase that catalyzes the regioselective in-chain hydroxylation of alkanes, fatty alcohols, and fatty acids at the omega-7 position. Performs hydroxylation of C10-C16 n-alkanes and C12 and C14 fatty alcohols; and thereby enables the one step biocatalytic synthesis of rare alcohols such as 5-dodecanol and 7-tetradecanol. Converts 1-dodecanol into 1,5-dodecanediol as major product with very little sub-terminally hydroxylated products with the 1,4-dodecanediol and 1,6-dodecanediol more abundant. Does not use hexadecanediol nor decanoic acid as substrates. Converts dodecanoic acid to 5-hydroxydodecanoic acid which can be further converted into delta-dodecalactone by lactonization of the 5-hydroxy acid at low pH. Also gives sub-terminal hydroxylation of dodecanoic acid with 9-hydroxydodecanoic acid being the second most abundant product. The C14 and C16 fatty acids are double hydroxylated to yield dihydroxy acids hydroxylated at both the omega-7 position and a sub-terminal position (omega-1, omega-2, or omega-3). This chain is Self-sufficient cytochrome P450 monooxygenase CYP505E3, found in Aspergillus terreus (strain NIH 2624 / FGSC A1156).